Consider the following 162-residue polypeptide: UPF0178 protein RSKD131_2223 (162 aa).

It belongs to the UPF0178 family.

The polypeptide is UPF0178 protein RSKD131_2223 (Cereibacter sphaeroides (strain KD131 / KCTC 12085) (Rhodobacter sphaeroides)).